The following is a 32-amino-acid chain: PRRRRRSSSRPIRRRRRPRVSRRRRRGGRRRR.

The interval 1–32 is disordered; sequence PRRRRRSSSRPIRRRRRPRVSRRRRRGGRRRR.

Testis.

It is found in the nucleus. It localises to the chromosome. Its function is as follows. Protamines substitute for histones in the chromatin of sperm during the haploid phase of spermatogenesis. They compact sperm DNA into a highly condensed, stable and inactive complex. The protein is Protamine-3A of Oncorhynchus mykiss (Rainbow trout).